A 359-amino-acid polypeptide reads, in one-letter code: Spore germination protein GerQC (359 aa).

A signal peptide spans 1 to 16; sequence MKRWILFLILSVFLIG. Cysteine 17 carries the N-palmitoyl cysteine lipid modification. Cysteine 17 carries S-diacylglycerol cysteine lipidation.

Belongs to the GerABKC lipoprotein family.

Its subcellular location is the membrane. Its function is as follows. Required for the germination response to inosine. Has no role in L-alanine germination. The chain is Spore germination protein GerQC (gerQC) from Bacillus cereus.